A 252-amino-acid chain; its full sequence is Trans-aconitate 2-methyltransferase (252 aa).

This sequence belongs to the methyltransferase superfamily. Tam family.

It localises to the cytoplasm. It carries out the reaction trans-aconitate + S-adenosyl-L-methionine = (E)-3-(methoxycarbonyl)pent-2-enedioate + S-adenosyl-L-homocysteine. Catalyzes the S-adenosylmethionine monomethyl esterification of trans-aconitate. This Escherichia coli O6:H1 (strain CFT073 / ATCC 700928 / UPEC) protein is Trans-aconitate 2-methyltransferase.